Consider the following 141-residue polypeptide: Large ribosomal subunit protein uL14 (141 aa).

It belongs to the universal ribosomal protein uL14 family. As to quaternary structure, part of the 50S ribosomal subunit. Forms a cluster with proteins L3 and L24e, part of which may contact the 16S rRNA in 2 intersubunit bridges.

In terms of biological role, binds to 23S rRNA. Forms part of two intersubunit bridges in the 70S ribosome. This chain is Large ribosomal subunit protein uL14, found in Pyrococcus furiosus (strain ATCC 43587 / DSM 3638 / JCM 8422 / Vc1).